The sequence spans 438 residues: Cysteine--tRNA ligase (438 aa).

A Zn(2+)-binding site is contributed by Cys-28. A 'HIGH' region motif is present at residues 30 to 40 (PTVYNHLHLGN). Zn(2+) contacts are provided by Cys-207, His-232, and Glu-236. Residues 264–268 (KMSKS) carry the 'KMSKS' region motif. Lys-267 is a binding site for ATP.

This sequence belongs to the class-I aminoacyl-tRNA synthetase family. As to quaternary structure, monomer. Requires Zn(2+) as cofactor.

It is found in the cytoplasm. The enzyme catalyses tRNA(Cys) + L-cysteine + ATP = L-cysteinyl-tRNA(Cys) + AMP + diphosphate. The protein is Cysteine--tRNA ligase of Aster yellows witches'-broom phytoplasma (strain AYWB).